A 169-amino-acid polypeptide reads, in one-letter code: Macrocypin-1a (169 aa).

Belongs to the protease inhibitor I85 family.

In terms of biological role, inhibits papain and cysteine cathepsin endopeptidases, and also inhibits cathepsins B and H, which exhibit both exopeptidase and endopeptidase activities. This Macrolepiota procera (Parasol mushroom) protein is Macrocypin-1a.